Reading from the N-terminus, the 651-residue chain is Protein numb homolog (651 aa).

Positions 33–193 (RTGKCSFPVK…ASRTTFTREG (161 aa)) constitute a PID domain. Thr-102 carries the phosphothreonine; by AAK1 modification. At Ser-194 the chain carries Phosphoserine. The interval 228-255 (SSVAPGNTAPSPSSPTSPTSDATTSLEM) is disordered. Low complexity predominate over residues 235 to 252 (TAPSPSSPTSPTSDATTS). Phosphothreonine is present on Thr-243. Ser-244 carries the phosphoserine modification. Ser-276 and Ser-295 each carry phosphoserine; by CaMK1. Disordered stretches follow at residues 419–483 (QSSG…SPFQ) and 623–651 (LENK…EIEL). At Ser-425 the chain carries Phosphoserine. At Thr-436 the chain carries Phosphothreonine. The span at 436–449 (TPSEADRWLEEVSK) shows a compositional bias: basic and acidic residues. Ser-438 carries the post-translational modification Phosphoserine. A compositionally biased stretch (low complexity) spans 453–466 (AQQPQASAAPLQPV). The segment covering 630-644 (RTNPSPTNPFSSDLQ) has biased composition (polar residues). At Ser-634 the chain carries Phosphoserine.

Interacts with SIAH1. Interacts with LNX. Interacts with CDH1. Interacts with TFAP2A and TFAP2B. Interacts with RALBP1 in a complex also containing EPN1 and TFAP2A during interphase and mitosis. Interacts with AAK1. May interact with DUOXA1. Phosphorylated on Ser-276 and Ser-295 by CaMK1. In terms of processing, isoform 1 and isoform 2 are ubiquitinated by LNX leading to their subsequent proteasomal degradation. Ubiquitinated; mediated by SIAH1 and leading to its subsequent proteasomal degradation.

The protein localises to the cell membrane. It is found in the endosome membrane. Functionally, regulates clathrin-mediated receptor endocytosis. Plays a role in the process of neurogenesis. Required throughout embryonic neurogenesis to maintain neural progenitor cells, also called radial glial cells (RGCs), by allowing their daughter cells to choose progenitor over neuronal cell fate. Not required for the proliferation of neural progenitor cells before the onset of neurogenesis. Also involved postnatally in the subventricular zone (SVZ) neurogenesis by regulating SVZ neuroblasts survival and ependymal wall integrity. May also mediate local repair of brain ventricular wall damage. This chain is Protein numb homolog, found in Homo sapiens (Human).